A 410-amino-acid chain; its full sequence is Lysosome-associated membrane glycoprotein 2 (410 aa).

Residues 1 to 28 (MVCFRLFPVPGSGLVLVCLVLGAVRSYA) form the signal peptide. A first lumenal domain region spans residues 29–192 (LELNLTDSEN…STNEFLCDKD (164 aa)). Residues 29 to 375 (LELNLTDSEN…QDCSADDDNF (347 aa)) are Lumenal-facing. 2 N-linked (GlcNAc...) (polylactosaminoglycan) asparagine glycosylation sites follow: Asn32 and Asn38. Cysteines 41 and 79 form a disulfide. N-linked (GlcNAc...) asparagine glycans are attached at residues Asn49, Asn58, Asn75, Asn101, Asn123, and Asn179. Cysteines 153 and 189 form a disulfide. The tract at residues 193–228 (KTSTVAPTIHTTVPSPTTTPTPKEKPEAGTYSVNNG) is hinge. Ser195 carries an O-linked (GalNAc...) serine glycan. Thr196, Thr200, Thr203, and Thr204 each carry an O-linked (GalNAc...) threonine glycan. Positions 199-213 (PTIHTTVPSPTTTPT) are enriched in low complexity. The tract at residues 199–221 (PTIHTTVPSPTTTPTPKEKPEAG) is disordered. Ser207 carries O-linked (GalNAc...) serine; partial glycosylation. A glycan (O-linked (GalNAc...) threonine; partial) is linked at Thr209. Thr210 and Thr211 each carry an O-linked (GalNAc...) threonine glycan. Thr213 carries O-linked (GalNAc...) threonine; partial glycosylation. N-linked (GlcNAc...) asparagine glycosylation is found at Asn229, Asn242, Asn257, Asn275, and Asn300. The interval 229–375 (NDTCLLATMG…QDCSADDDNF (147 aa)) is second lumenal domain. An intrachain disulfide couples Cys232 to Cys265. An N-linked (GlcNAc...) (polylactosaminoglycan) asparagine glycan is attached at Asn307. Residues Asn317 and Asn356 are each glycosylated (N-linked (GlcNAc...) asparagine). Residues Cys331 and Cys368 are joined by a disulfide bond. Residues 376–399 (LVPIAVGAALAGVLILVLLAYFIG) form a helical membrane-spanning segment. The Cytoplasmic segment spans residues 400–410 (LKHHHAGYEQF). The important for binding and subsequent lysosomal degradation of target proteins stretch occupies residues 401–404 (KHHH).

The protein belongs to the LAMP family. In terms of assembly, monomer. Homodimer. Homotrimer. Forms large homooligomers. Interacts (via its cytoplasmic region) with HSPA8; HSPA8 mediates recruitment of proteins with a KFERQ motif to the surface of the lysosome for chaperone-mediated autophagy. Interacts with HSP90 in the lysosome lumen; this enhances LAMP2 stability. Interacts with MLLT11. Interacts with ABCB9. Interacts with FURIN. Interacts with CT55; this interaction may be important for LAMP2 protein stability. Interacts with TMEM175; inhibiting the proton channel activity of TMEM175. Forms a ternary complex with RAB7A and RUFY4 (via RUN domain); the interaction with RAB7A is mediated by RUFY4 (via RUN and coiled coil domains). As to quaternary structure, (Microbial infection) Interacts with mumps virus protein F; this interaction promotes protein F cleavage by FURIN. Post-translationally, O- and N-glycosylated; some of the 16 N-linked glycans are polylactosaminoglycans. As to expression, isoform LAMP-2A is highly expressed in placenta, lung and liver, less in kidney and pancreas, low in brain and skeletal muscle. Isoform LAMP-2B is detected in spleen, thymus, prostate, testis, small intestine, colon, skeletal muscle, brain, placenta, lung, kidney, ovary and pancreas and liver. Isoform LAMP-2C is detected in small intestine, colon, heart, brain, skeletal muscle, and at lower levels in kidney and placenta.

Its subcellular location is the lysosome membrane. The protein localises to the endosome membrane. It localises to the cell membrane. The protein resides in the cytoplasmic vesicle. It is found in the autophagosome membrane. Its function is as follows. Lysosomal membrane glycoprotein which plays an important role in lysosome biogenesis, lysosomal pH regulation and autophagy. Acts as an important regulator of lysosomal lumen pH regulation by acting as a direct inhibitor of the proton channel TMEM175, facilitating lysosomal acidification for optimal hydrolase activity. Plays an important role in chaperone-mediated autophagy, a process that mediates lysosomal degradation of proteins in response to various stresses and as part of the normal turnover of proteins with a long biological half-live. Functions by binding target proteins, such as GAPDH, NLRP3 and MLLT11, and targeting them for lysosomal degradation. In the chaperone-mediated autophagy, acts downstream of chaperones, such as HSPA8/HSC70, which recognize and bind substrate proteins and mediate their recruitment to lysosomes, where target proteins bind LAMP2. Plays a role in lysosomal protein degradation in response to starvation. Required for the fusion of autophagosomes with lysosomes during autophagy. Cells that lack LAMP2 express normal levels of VAMP8, but fail to accumulate STX17 on autophagosomes, which is the most likely explanation for the lack of fusion between autophagosomes and lysosomes. Required for normal degradation of the contents of autophagosomes. Required for efficient MHC class II-mediated presentation of exogenous antigens via its function in lysosomal protein degradation; antigenic peptides generated by proteases in the endosomal/lysosomal compartment are captured by nascent MHC II subunits. Is not required for efficient MHC class II-mediated presentation of endogenous antigens. In terms of biological role, modulates chaperone-mediated autophagy. Decreases presentation of endogenous antigens by MHCII. Does not play a role in the presentation of exogenous and membrane-derived antigens by MHCII. Functionally, (Microbial infection) Supports the FURIN-mediated cleavage of mumps virus fusion protein F by interacting with both FURIN and the unprocessed form but not the processed form of the viral protein F. The sequence is that of Lysosome-associated membrane glycoprotein 2 (LAMP2) from Homo sapiens (Human).